A 1588-amino-acid polypeptide reads, in one-letter code: Pentafunctional AROM polypeptide (1588 aa).

The interval 1–392 is 3-dehydroquinate synthase; that stretch reads MVQLAKVPIL…YGDSAQFVSD (392 aa). Residues 43–45, 78–81, 109–111, and Asp-114 each bind NAD(+); these read DTN, ETSK, and GGV. Residue Arg-125 participates in 7-phospho-2-dehydro-3-deoxy-D-arabino-heptonate binding. NAD(+) is bound at residue 134 to 135; that stretch reads TS. Asp-141 and Lys-147 together coordinate 7-phospho-2-dehydro-3-deoxy-D-arabino-heptonate. Lys-156 serves as a coordination point for NAD(+). Residue Asn-157 participates in 7-phospho-2-dehydro-3-deoxy-D-arabino-heptonate binding. Residues 174–177 and Asn-185 each bind NAD(+); that span reads WLET. Residue Glu-189 coordinates Zn(2+). Residues 189–192 and Lys-258 contribute to the 7-phospho-2-dehydro-3-deoxy-D-arabino-heptonate site; that span reads EVIK. Glu-268 functions as the Proton acceptor; for 3-dehydroquinate synthase activity in the catalytic mechanism. 7-phospho-2-dehydro-3-deoxy-D-arabino-heptonate contacts are provided by residues 272 to 276 and His-279; that span reads RNLLN. His-279 lines the Zn(2+) pocket. His-283 (proton acceptor; for 3-dehydroquinate synthase activity) is an active-site residue. His-295 and Lys-364 together coordinate 7-phospho-2-dehydro-3-deoxy-D-arabino-heptonate. His-295 provides a ligand contact to Zn(2+). Positions 405–871 are EPSP synthase; that stretch reads VYPFKDIPAD…WDVLHSELGA (467 aa). The For EPSP synthase activity role is filled by Cys-853. The tract at residues 890–1080 is shikimate kinase; the sequence is SVVIIGMRAA…IPSGRSAFVC (191 aa). ATP is bound at residue 895–902; the sequence is GMRAAGKT. The 3-dehydroquinase stretch occupies residues 1081–1293; it reads LTFDDLTEQT…AAPGQLTVAQ (213 aa). The active-site Proton acceptor; for 3-dehydroquinate dehydratase activity is the His-1198. Lys-1227 serves as the catalytic Schiff-base intermediate with substrate; for 3-dehydroquinate dehydratase activity. A shikimate dehydrogenase region spans residues 1306–1588; that stretch reads PKELFVVGKP…KAIFDAVTKE (283 aa).

In the N-terminal section; belongs to the sugar phosphate cyclases superfamily. Dehydroquinate synthase family. This sequence in the 2nd section; belongs to the EPSP synthase family. It in the 3rd section; belongs to the shikimate kinase family. The protein in the 4th section; belongs to the type-I 3-dehydroquinase family. In the C-terminal section; belongs to the shikimate dehydrogenase family. As to quaternary structure, homodimer. Zn(2+) is required as a cofactor.

It localises to the cytoplasm. It catalyses the reaction 7-phospho-2-dehydro-3-deoxy-D-arabino-heptonate = 3-dehydroquinate + phosphate. It carries out the reaction 3-dehydroquinate = 3-dehydroshikimate + H2O. The catalysed reaction is shikimate + NADP(+) = 3-dehydroshikimate + NADPH + H(+). The enzyme catalyses shikimate + ATP = 3-phosphoshikimate + ADP + H(+). It catalyses the reaction 3-phosphoshikimate + phosphoenolpyruvate = 5-O-(1-carboxyvinyl)-3-phosphoshikimate + phosphate. It participates in metabolic intermediate biosynthesis; chorismate biosynthesis; chorismate from D-erythrose 4-phosphate and phosphoenolpyruvate: step 2/7. Its pathway is metabolic intermediate biosynthesis; chorismate biosynthesis; chorismate from D-erythrose 4-phosphate and phosphoenolpyruvate: step 3/7. The protein operates within metabolic intermediate biosynthesis; chorismate biosynthesis; chorismate from D-erythrose 4-phosphate and phosphoenolpyruvate: step 4/7. It functions in the pathway metabolic intermediate biosynthesis; chorismate biosynthesis; chorismate from D-erythrose 4-phosphate and phosphoenolpyruvate: step 5/7. It participates in metabolic intermediate biosynthesis; chorismate biosynthesis; chorismate from D-erythrose 4-phosphate and phosphoenolpyruvate: step 6/7. In terms of biological role, the AROM polypeptide catalyzes 5 consecutive enzymatic reactions in prechorismate polyaromatic amino acid biosynthesis. The sequence is that of Pentafunctional AROM polypeptide from Saccharomyces cerevisiae (strain Lalvin EC1118 / Prise de mousse) (Baker's yeast).